Consider the following 679-residue polypeptide: DNA ligase (679 aa).

Residues 41 to 45, 90 to 91, and E120 each bind NAD(+); these read DSVYD and SL. The N6-AMP-lysine intermediate role is filled by K122. NAD(+) contacts are provided by R143, E177, K293, and K317. Zn(2+) is bound by residues C411, C414, C429, and C434. Residues 597–679 enclose the BRCT domain; it reads DSNSWFAGKR…SETMREDAQA (83 aa).

The protein belongs to the NAD-dependent DNA ligase family. LigA subfamily. It depends on Mg(2+) as a cofactor. Requires Mn(2+) as cofactor.

It carries out the reaction NAD(+) + (deoxyribonucleotide)n-3'-hydroxyl + 5'-phospho-(deoxyribonucleotide)m = (deoxyribonucleotide)n+m + AMP + beta-nicotinamide D-nucleotide.. DNA ligase that catalyzes the formation of phosphodiester linkages between 5'-phosphoryl and 3'-hydroxyl groups in double-stranded DNA using NAD as a coenzyme and as the energy source for the reaction. It is essential for DNA replication and repair of damaged DNA. In Lactiplantibacillus plantarum (strain ATCC BAA-793 / NCIMB 8826 / WCFS1) (Lactobacillus plantarum), this protein is DNA ligase.